A 101-amino-acid polypeptide reads, in one-letter code: Osteocalcin (101 aa).

An N-terminal signal peptide occupies residues 1 to 18; the sequence is MKLAIVLLLLGLAVLCLG. The propeptide occupies 19 to 52; the sequence is GKDSQHSASAGDSRSSEAFISRQDSANFARRHKR. The Gla domain occupies 53–99; that stretch reads SYRYNVARGAAVTSPLESQREVCELNPDCDELADHIGFQEAYRRFYG. Ca(2+)-binding residues include Glu69, Glu73, Glu76, and Asp82. 4-carboxyglutamate occurs at positions 69, 73, and 76. A disulfide bridge links Cys75 with Cys81.

This sequence belongs to the osteocalcin/matrix Gla protein family. In terms of processing, gamma-carboxyglutamate residues are formed by vitamin K dependent carboxylation by GGCX. These residues are essential for the binding of calcium.

It localises to the secreted. Its function is as follows. The carboxylated form is one of the main organic components of the bone matrix, which constitutes 1-2% of the total bone protein. The carboxylated form binds strongly to apatite and calcium. This Xenopus tropicalis (Western clawed frog) protein is Osteocalcin (bglap).